The sequence spans 182 residues: Oligoribonuclease (182 aa).

The Exonuclease domain occupies L8–L171. The active site involves Y129.

This sequence belongs to the oligoribonuclease family.

Its subcellular location is the cytoplasm. Functionally, 3'-to-5' exoribonuclease specific for small oligoribonucleotides. The chain is Oligoribonuclease from Haemophilus influenzae (strain 86-028NP).